The sequence spans 291 residues: B-lymphocyte antigen CD20 (291 aa).

Residues 1 to 44 (MSGPFPAEPTKGPLAMQPAPKVNLKRTSSLVGPTQSFFMRESKA) are Cytoplasmic-facing. Ser-29 bears the Phosphoserine mark. Residues 45–65 (LGAVQIMNGLFHITLGGLLMI) form a helical membrane-spanning segment. The Extracellular portion of the chain corresponds to 66-68 (PTG). A helical transmembrane segment spans residues 69-89 (VFAPICLSVWYPLWGGIMYII). The Cytoplasmic portion of the chain corresponds to 90–111 (SGSLLAAAAEKTSRKSLVKAKV). The helical transmembrane segment at 112-132 (IMSSLSLFAAISGIILSIMDI) threads the bilayer. The Extracellular segment spans residues 133–182 (LNMTLSHFLKMRRLELIQTSKPYVDIYDCEPSNSSEKNSPSTQYCNSIQS). The chain crosses the membrane as a helical span at residues 183–203 (VFLGILSAMLISAFFQKLVTA). The Cytoplasmic portion of the chain corresponds to 204 to 291 (GIVENEWKRM…SLPVENEIAP (88 aa)). Residue Cys-214 is the site of S-palmitoyl cysteine attachment. At Ser-219 the chain carries Phosphoserine. Phosphothreonine is present on Thr-233. Over residues 261–270 (VQEEEEEEAE) the composition is skewed to acidic residues. The tract at residues 261-291 (VQEEEEEEAEINFPAPPQEQESLPVENEIAP) is disordered.

The protein belongs to the MS4A family. In terms of assembly, forms homotetramers. Interacts with the heavy and light chains of cell surface IgM, the antigen-binding components of the BCR. Phosphorylated.

The protein resides in the cell membrane. In terms of biological role, B-lymphocyte-specific membrane protein that plays a role in the regulation of cellular calcium influx necessary for the development, differentiation, and activation of B-lymphocytes. Functions as a store-operated calcium (SOC) channel component promoting calcium influx after activation by the B-cell receptor/BCR. This chain is B-lymphocyte antigen CD20 (Ms4a1), found in Mus musculus (Mouse).